The chain runs to 691 residues: Elongation factor G (691 aa).

A tr-type G domain is found at 8–282; the sequence is HMVRNIGIAA…AVVDYLPAPD (275 aa). GTP is bound by residues 17 to 24, 81 to 85, and 135 to 138; these read AHIDAGKT, DTPGH, and NKMD.

This sequence belongs to the TRAFAC class translation factor GTPase superfamily. Classic translation factor GTPase family. EF-G/EF-2 subfamily.

The protein localises to the cytoplasm. Its function is as follows. Catalyzes the GTP-dependent ribosomal translocation step during translation elongation. During this step, the ribosome changes from the pre-translocational (PRE) to the post-translocational (POST) state as the newly formed A-site-bound peptidyl-tRNA and P-site-bound deacylated tRNA move to the P and E sites, respectively. Catalyzes the coordinated movement of the two tRNA molecules, the mRNA and conformational changes in the ribosome. This is Elongation factor G from Campylobacter hominis (strain ATCC BAA-381 / DSM 21671 / CCUG 45161 / LMG 19568 / NCTC 13146 / CH001A).